Here is a 209-residue protein sequence, read N- to C-terminus: Histidine biosynthesis bifunctional protein HisIE (209 aa).

Residues 1 to 123 (MEIEKLLEQV…VLPIDYSLSI (123 aa)) form a phosphoribosyl-AMP cyclohydrolase region. The tract at residues 124-209 (LKELEEIIKR…VMNELRRRRK (86 aa)) is phosphoribosyl-ATP pyrophosphohydrolase.

It in the N-terminal section; belongs to the PRA-CH family. In the C-terminal section; belongs to the PRA-PH family.

It is found in the cytoplasm. It catalyses the reaction 1-(5-phospho-beta-D-ribosyl)-ATP + H2O = 1-(5-phospho-beta-D-ribosyl)-5'-AMP + diphosphate + H(+). The enzyme catalyses 1-(5-phospho-beta-D-ribosyl)-5'-AMP + H2O = 1-(5-phospho-beta-D-ribosyl)-5-[(5-phospho-beta-D-ribosylamino)methylideneamino]imidazole-4-carboxamide. It functions in the pathway amino-acid biosynthesis; L-histidine biosynthesis; L-histidine from 5-phospho-alpha-D-ribose 1-diphosphate: step 2/9. Its pathway is amino-acid biosynthesis; L-histidine biosynthesis; L-histidine from 5-phospho-alpha-D-ribose 1-diphosphate: step 3/9. This chain is Histidine biosynthesis bifunctional protein HisIE (hisI), found in Pyrococcus furiosus (strain ATCC 43587 / DSM 3638 / JCM 8422 / Vc1).